The chain runs to 206 residues: ATP phosphoribosyltransferase (206 aa).

This sequence belongs to the ATP phosphoribosyltransferase family. Short subfamily. As to quaternary structure, heteromultimer composed of HisG and HisZ subunits.

The protein resides in the cytoplasm. The enzyme catalyses 1-(5-phospho-beta-D-ribosyl)-ATP + diphosphate = 5-phospho-alpha-D-ribose 1-diphosphate + ATP. It participates in amino-acid biosynthesis; L-histidine biosynthesis; L-histidine from 5-phospho-alpha-D-ribose 1-diphosphate: step 1/9. Catalyzes the condensation of ATP and 5-phosphoribose 1-diphosphate to form N'-(5'-phosphoribosyl)-ATP (PR-ATP). Has a crucial role in the pathway because the rate of histidine biosynthesis seems to be controlled primarily by regulation of HisG enzymatic activity. The polypeptide is ATP phosphoribosyltransferase (Wolinella succinogenes (strain ATCC 29543 / DSM 1740 / CCUG 13145 / JCM 31913 / LMG 7466 / NCTC 11488 / FDC 602W) (Vibrio succinogenes)).